Here is a 499-residue protein sequence, read N- to C-terminus: Glycerol kinase 2 (499 aa).

Residue Thr13 participates in ADP binding. ATP-binding residues include Thr13, Thr14, and Ser15. A sn-glycerol 3-phosphate-binding site is contributed by Thr13. Position 17 (Arg17) interacts with ADP. Sn-glycerol 3-phosphate is bound by residues Arg83, Glu84, Tyr134, and Asp241. 5 residues coordinate glycerol: Arg83, Glu84, Tyr134, Asp241, and Gln242. Residues Thr263 and Gly306 each contribute to the ADP site. ATP contacts are provided by Thr263, Gly306, Gln310, and Gly407. Gly407 is an ADP binding site.

It belongs to the FGGY kinase family.

The enzyme catalyses glycerol + ATP = sn-glycerol 3-phosphate + ADP + H(+). It functions in the pathway polyol metabolism; glycerol degradation via glycerol kinase pathway; sn-glycerol 3-phosphate from glycerol: step 1/1. Key enzyme in the regulation of glycerol uptake and metabolism. Catalyzes the phosphorylation of glycerol to yield sn-glycerol 3-phosphate. The protein is Glycerol kinase 2 of Saccharolobus solfataricus (strain ATCC 35092 / DSM 1617 / JCM 11322 / P2) (Sulfolobus solfataricus).